The following is a 67-amino-acid chain: Large ribosomal subunit protein bL35 (67 aa).

This sequence belongs to the bacterial ribosomal protein bL35 family.

The polypeptide is Large ribosomal subunit protein bL35 (Agrobacterium fabrum (strain C58 / ATCC 33970) (Agrobacterium tumefaciens (strain C58))).